Consider the following 81-residue polypeptide: Cytotoxin 5 (81 aa).

The signal sequence occupies residues 1–21 (MKTLLLTLVVVTIVCLDLGYT). 4 disulfide bridges follow: Cys-24–Cys-42, Cys-35–Cys-59, Cys-63–Cys-74, and Cys-75–Cys-80.

This sequence belongs to the three-finger toxin family. Short-chain subfamily. Type IA cytotoxin sub-subfamily. Monomer in solution; Homodimer and oligomer in the presence of negatively charged lipids forming a pore with a size ranging between 20 and 30 Angstroms. In terms of tissue distribution, expressed by the venom gland.

It is found in the secreted. The protein resides in the target cell membrane. Functionally, shows cytolytic activity on many different cells by forming pore in lipid membranes. In vivo, increases heart rate or kills the animal by cardiac arrest. In addition, it binds to heparin with high affinity, interacts with Kv channel-interacting protein 1 (KCNIP1) in a calcium-independent manner, and binds to integrin alpha-V/beta-3 (ITGAV/ITGB3) with moderate affinity. The polypeptide is Cytotoxin 5 (Naja atra (Chinese cobra)).